The sequence spans 88 residues: Small ribosomal subunit protein uS15 (88 aa).

The protein belongs to the universal ribosomal protein uS15 family. In terms of assembly, part of the 30S ribosomal subunit. Forms a bridge to the 50S subunit in the 70S ribosome, contacting the 23S rRNA.

One of the primary rRNA binding proteins, it binds directly to 16S rRNA where it helps nucleate assembly of the platform of the 30S subunit by binding and bridging several RNA helices of the 16S rRNA. Its function is as follows. Forms an intersubunit bridge (bridge B4) with the 23S rRNA of the 50S subunit in the ribosome. The protein is Small ribosomal subunit protein uS15 of Methylacidiphilum infernorum (isolate V4) (Methylokorus infernorum (strain V4)).